The primary structure comprises 343 residues: F17e-G fimbrial adhesin (343 aa).

An N-terminal signal peptide occupies residues 1 to 22 (MTNFYKVFLAVFILVCCNISHA). The receptor-binding lectin domain stretch occupies residues 23–199 (AVSFIGSTEN…LNPFTLNDTV (177 aa)). A carbohydrate is bound by residues 65-66 (AN), 110-111 (DT), and 138-141 (STQG). Cysteines 75 and 132 form a disulfide. Residues 200 to 343 (TSCRLLTPSA…GISTFTFSYQ (144 aa)) are fimbrillin-binding domain. The tract at residues 287–307 (LKFGPDSPVKGNENQWQLSTG) is disordered. Positions 298–307 (NENQWQLSTG) are enriched in polar residues.

It belongs to the fimbrial protein family.

The protein localises to the fimbrium. Functionally, essential fimbrial adhesion factor that mediates binding to N-acetylglucosamine-containing receptors in the host intestinal microvilli, leading to colonization of the intestinal tissue, and diarrhea or septicemia. Also confers adhesiveness to laminin and basement membranes. The polypeptide is F17e-G fimbrial adhesin (f17eG) (Escherichia coli).